The following is a 1116-amino-acid chain: Angiopoietin-1 receptor (1116 aa).

Positions 1–21 (MCLLDSCTALLLLGCWMSGSA) are cleaved as a signal peptide. The Extracellular segment spans residues 22 to 745 (VRISDVTLVN…FAAHGHLLLY (724 aa)). Cysteines 46 and 106 form a disulfide. Residues 46-126 (CVSSDWSSGG…YTYKMLQEAA (81 aa)) form the Ig-like C2-type 1 domain. Residues N110, N143, and N223 are each glycosylated (N-linked (GlcNAc...) asparagine). 3 consecutive EGF-like domains span residues 214 to 256 (SCRA…HTCD), 258 to 302 (VCGE…LSCN), and 304 to 342 (ACPD…SRCE). 12 disulfides stabilise this stretch: C215–C224, C228–C237, C231–C244, C246–C255, C259–C268, C272–C277, C283–C290, C292–C301, C305–C314, C318–C325, C320–C331, and C333–C341. An Ig-like C2-type 2 domain is found at 348–438 (PVISHLRDVE…MQVEDEFTVE (91 aa)). 3 N-linked (GlcNAc...) asparagine glycosylation sites follow: N367, N387, and N425. C368 and C422 are disulfide-bonded. 3 consecutive Fibronectin type-III domains span residues 444 to 538 (RPQN…TQVL), 540 to 633 (LPVG…QLPP), and 634 to 729 (PPAN…TLPQ). 3 N-linked (GlcNAc...) asparagine glycosylation sites follow: N590, N637, and N642. A helical membrane pass occupies residues 746–766 (AILGSAGMTCCTVLLAFCIVL). Topologically, residues 767–1116 (QLKRNTLQRR…GIDCSAEEAG (350 aa)) are cytoplasmic. One can recognise a Protein kinase domain in the interval 816–1095 (IQFQDVLGEG…RMLEERKTYV (280 aa)). Residues 822 to 830 (LGEGNFGQV) and K847 each bind ATP. At Y852 the chain carries Phosphotyrosine; by autocatalysis. D956 (proton acceptor) is an active-site residue. Y984, Y1094, and Y1100 each carry phosphotyrosine; by autocatalysis.

It belongs to the protein kinase superfamily. Tyr protein kinase family. Tie subfamily. Interacts with svep1. Autophosphorylated on tyrosine residues in response to ligand binding. Autophosphorylation occurs in trans, i.e. one subunit of the dimeric receptor phosphorylates tyrosine residues on the other subunit. Autophosphorylation occurs in a sequential manner, where Tyr-984 in the kinase activation loop is phosphorylated first, followed by autophosphorylation at additional tyrosine residues. Phosphorylation is important for interaction with scaffold proteins and effectors.

It localises to the cell membrane. The protein resides in the cell junction. The protein localises to the focal adhesion. It is found in the cytoplasm. Its subcellular location is the cytoskeleton. It carries out the reaction L-tyrosyl-[protein] + ATP = O-phospho-L-tyrosyl-[protein] + ADP + H(+). Angiopoietin binding leads to receptor dimerization and activation by autophosphorylation at Tyr-984 on the kinase activation loop. Functionally, tyrosine-protein kinase that acts as a cell-surface receptor for angiopoietins and regulates angiogenesis, endothelial cell survival, proliferation, migration, adhesion and cell spreading, reorganization of the actin cytoskeleton, but also maintenance of vascular quiescence. Can activate or inhibit angiogenesis, depending on the context. Angiopoietin signaling triggers receptor dimerization and autophosphorylation at specific tyrosine residues that then serve as binding sites for scaffold proteins and effectors. This chain is Angiopoietin-1 receptor, found in Danio rerio (Zebrafish).